The chain runs to 837 residues: Tuftelin-interacting protein 11 (837 aa).

Composition is skewed to basic and acidic residues over residues 1–13 (MSLS…GEGH) and 44–64 (QTKE…EERP). Disordered stretches follow at residues 1–21 (MSLS…DDER), 34–73 (EFNP…RARD), and 85–135 (LKKG…FAGG). Residues 1–50 (MSLSHLYRDGEGHLDDDDDERENFEITDWDLQNEFNPNRQRHWQTKEEAT) form a required for interaction with DHX15 region. A phosphoserine mark is found at S2, S59, S95, and S98. The span at 91–100 (EEADSEDSDA) shows a compositional bias: acidic residues. Residues 101–116 (EEKPVKQEDFPKDLGP) are compositionally biased toward basic and acidic residues. Phosphoserine is present on S144. Residues 149-195 (TKGIGQKLLQKMGYVPGRGLGKNAQGIINPIEAKQRKGKGAVGAYGS) enclose the G-patch domain. The disordered stretch occupies residues 183–236 (QRKGKGAVGAYGSERTTQSLQDFPVADSEEEAEEEFQKELSQWRKDPSGSKKKP). S210 carries the phosphoserine modification. Over residues 217 to 231 (EFQKELSQWRKDPSG) the composition is skewed to basic and acidic residues. Positions 700–705 (VKDKFN) match the Nuclear localization signal motif. Residues 710-734 (IMNRAVSSNVGAYMQPGARENIAYL) form a required for nuclear speckle localization region.

The protein belongs to the TFP11/STIP family. In terms of assembly, identified in the spliceosome C complex. Found in the Intron Large (IL) complex, a post-mRNA release spliceosomal complex containing the excised intron, U2, U5 and U6 snRNPs, and splicing factors. Interacts with TUFT1. Interacts with DHX15; indicative for a recruitment of DHX15 to the IL complex. Interacts with GCFC2.

Its subcellular location is the cytoplasm. It localises to the nucleus. Functionally, involved in pre-mRNA splicing, specifically in spliceosome disassembly during late-stage splicing events. Intron turnover seems to proceed through reactions in two lariat-intron associated complexes termed Intron Large (IL) and Intron Small (IS). In cooperation with DHX15 seems to mediate the transition of the U2, U5 and U6 snRNP-containing IL complex to the snRNP-free IS complex leading to efficient debranching and turnover of excised introns. May play a role in the differentiation of ameloblasts and odontoblasts or in the forming of the enamel extracellular matrix. In Rattus norvegicus (Rat), this protein is Tuftelin-interacting protein 11 (Tfip11).